The primary structure comprises 293 residues: 4-hydroxy-tetrahydrodipicolinate synthase (293 aa).

Position 46 (T46) interacts with pyruvate. Residue Y134 is the Proton donor/acceptor of the active site. K162 acts as the Schiff-base intermediate with substrate in catalysis. I204 lines the pyruvate pocket.

This sequence belongs to the DapA family. As to quaternary structure, homotetramer; dimer of dimers.

It localises to the cytoplasm. The enzyme catalyses L-aspartate 4-semialdehyde + pyruvate = (2S,4S)-4-hydroxy-2,3,4,5-tetrahydrodipicolinate + H2O + H(+). It functions in the pathway amino-acid biosynthesis; L-lysine biosynthesis via DAP pathway; (S)-tetrahydrodipicolinate from L-aspartate: step 3/4. Functionally, catalyzes the condensation of (S)-aspartate-beta-semialdehyde [(S)-ASA] and pyruvate to 4-hydroxy-tetrahydrodipicolinate (HTPA). The sequence is that of 4-hydroxy-tetrahydrodipicolinate synthase from Bdellovibrio bacteriovorus (strain ATCC 15356 / DSM 50701 / NCIMB 9529 / HD100).